A 113-amino-acid chain; its full sequence is Type III endosome membrane protein TEMP (113 aa).

The tract at residues 1-22 (MNETNKTLVGPSELPTASAVAP) is disordered. The Extracellular segment spans residues 1–29 (MNETNKTLVGPSELPTASAVAPGPGTGAR). N-linked (GlcNAc...) asparagine glycosylation occurs at Asn5. The helical; Signal-anchor for type III membrane protein transmembrane segment at 30–50 (AWPVLVGFVLGAVVLSLLIAL) threads the bilayer. Residues 51–113 (AAKCHLCRRY…TEGSRDHFSL (63 aa)) lie on the Cytoplasmic side of the membrane. A disordered region spans residues 66–113 (HRPLPETGRGGRPQVAEDEDDDGFIEDNYIQPGTGELGTEGSRDHFSL). The segment covering 81–90 (AEDEDDDGFI) has biased composition (acidic residues).

It localises to the membrane. The protein resides in the early endosome. The protein localises to the recycling endosome. Its subcellular location is the cell membrane. Its function is as follows. May be involved in membrane trafficking between endosomes and plasma membrane. The chain is Type III endosome membrane protein TEMP (C1orf210) from Homo sapiens (Human).